The sequence spans 257 residues: Phosphate import ATP-binding protein PstB (257 aa).

The ABC transporter domain occupies Leu-5–Glu-246. Gly-37–Ser-44 is a binding site for ATP.

This sequence belongs to the ABC transporter superfamily. Phosphate importer (TC 3.A.1.7) family. As to quaternary structure, the complex is composed of two ATP-binding proteins (PstB), two transmembrane proteins (PstC and PstA) and a solute-binding protein (PstS).

The protein localises to the cell membrane. It catalyses the reaction phosphate(out) + ATP + H2O = ADP + 2 phosphate(in) + H(+). Functionally, part of the ABC transporter complex PstSACB involved in phosphate import. Responsible for energy coupling to the transport system. In Tropheryma whipplei (strain Twist) (Whipple's bacillus), this protein is Phosphate import ATP-binding protein PstB.